Consider the following 553-residue polypeptide: MRVSRRFTILAITAMIFLSLIICIYAVAAHTTVNVILQKQERSYGVICDAGSTGTRLFVYNWVSTSDSELIQIEPVIYDNKPVMKKISPGLSTFGTKPDEAAEYLRPLMELAELHIPEEKRPYTPVFIFATAGMRLIPDEQKEAVLTNLRTELPKITSMQVLKEHIRIIEGKWEGIYSWIAVNYALGKFNRTFTPDFPGTSPGQQRSKTVGMIDMGGASAQIAFELPDNDDFNSINVENINLGCREDDSLFRYKLFVTTFLGYGVNEGIRKYEKTLMAKLKDQNGTVIQDDCMPLNLHKTVTMENGDNFVRRGTGNWDTCAAEVKKLLNPETSSEVCKAEVAKCYFGAVPAPNIPLSNVEMYGFSEYWYSTHDVLGLGGQYNAENIAKKSEQYCGQRWSTIQAASKKNLYPRADEERLKTQCFKSAWITSVLHDGFSVDKTHNKFQSVSTIAGQEVQWALGAMIYHMRFFPLRDSTRNLIVKETHSASESLWAPLFFLSAVFCLFVLVCAKEHSLLCFDDKRRASFGLTRRQYSYKMLKEDRTSSSAFLENFA.

Over 1–8 (MRVSRRFT) the chain is Cytoplasmic. The chain crosses the membrane as a helical span at residues 9 to 29 (ILAITAMIFLSLIICIYAVAA). Topologically, residues 30 to 489 (HTTVNVILQK…IVKETHSASE (460 aa)) are lumenal. The active-site Proton acceptor is the Glu174. N-linked (GlcNAc...) asparagine glycosylation is found at Asn190 and Asn284. Residues 490 to 510 (SLWAPLFFLSAVFCLFVLVCA) form a helical membrane-spanning segment. Over 511 to 553 (KEHSLLCFDDKRRASFGLTRRQYSYKMLKEDRTSSSAFLENFA) the chain is Cytoplasmic.

Belongs to the GDA1/CD39 NTPase family.

It localises to the golgi apparatus membrane. It catalyses the reaction a ribonucleoside 5'-diphosphate + H2O = a ribonucleoside 5'-phosphate + phosphate + H(+). Functionally, seems to be able to hydrolyze ADP, UDP and GDP. Supports mig-17 glycosylation and surface expression, which is required for proper migration of distal tip cells during gonad morphogenesis. In Caenorhabditis briggsae, this protein is Nucleoside-diphosphatase mig-23.